A 288-amino-acid polypeptide reads, in one-letter code: 4-diphosphocytidyl-2-C-methyl-D-erythritol kinase (288 aa).

Lys-8 is an active-site residue. Pro-90–Ser-100 lines the ATP pocket. Asp-132 is an active-site residue.

The protein belongs to the GHMP kinase family. IspE subfamily.

It catalyses the reaction 4-CDP-2-C-methyl-D-erythritol + ATP = 4-CDP-2-C-methyl-D-erythritol 2-phosphate + ADP + H(+). It functions in the pathway isoprenoid biosynthesis; isopentenyl diphosphate biosynthesis via DXP pathway; isopentenyl diphosphate from 1-deoxy-D-xylulose 5-phosphate: step 3/6. Catalyzes the phosphorylation of the position 2 hydroxy group of 4-diphosphocytidyl-2C-methyl-D-erythritol. This is 4-diphosphocytidyl-2-C-methyl-D-erythritol kinase from Chlorobium chlorochromatii (strain CaD3).